Reading from the N-terminus, the 347-residue chain is NADH-ubiquinone oxidoreductase chain 2 (347 aa).

The next 11 helical transmembrane spans lie at 3–23, 25–45, 66–86, 96–116, 122–142, 145–165, 178–198, 200–220, 237–257, 274–294, and 325–345; these read PIIF…VMIS, HWLR…PIMM, ASML…QWTV, MLMT…FWVP, IPLS…MSVL, ILPS…IMIG, IMAY…PYNP, MMLL…LLFM, MPIM…LPPL, NSII…YFYM, and LLPT…ILSI.

Belongs to the complex I subunit 2 family. As to quaternary structure, core subunit of respiratory chain NADH dehydrogenase (Complex I) which is composed of 45 different subunits. Interacts with TMEM242.

It localises to the mitochondrion inner membrane. The enzyme catalyses a ubiquinone + NADH + 5 H(+)(in) = a ubiquinol + NAD(+) + 4 H(+)(out). In terms of biological role, core subunit of the mitochondrial membrane respiratory chain NADH dehydrogenase (Complex I) which catalyzes electron transfer from NADH through the respiratory chain, using ubiquinone as an electron acceptor. Essential for the catalytic activity and assembly of complex I. This chain is NADH-ubiquinone oxidoreductase chain 2, found in Capra hircus (Goat).